The following is a 501-amino-acid chain: DNA nucleotidylexotransferase (501 aa).

The Nuclear localization signal motif lies at 11–17; that stretch reads KKRKRPV. In terms of domain architecture, BRCT spans 24-121; the sequence is QVEVKFKEVT…RPVRVETRHS (98 aa). An involved in DNA binding region spans residues 249–253; it reads VGPKT. A 2'-deoxyribonucleoside 5'-triphosphate contacts are provided by residues 324–329 and 333–336; these read GFRRGK and HDVD. Residues aspartate 334, aspartate 336, and aspartate 426 each coordinate Mg(2+). A 2'-deoxyribonucleoside 5'-triphosphate is bound at residue 441 to 442; that stretch reads GW.

Belongs to the DNA polymerase type-X family. It depends on Mg(2+) as a cofactor.

The protein localises to the nucleus. The catalysed reaction is DNA(n) + a 2'-deoxyribonucleoside 5'-triphosphate = DNA(n+1) + diphosphate. In terms of biological role, template-independent DNA polymerase which catalyzes the random addition of deoxynucleoside 5'-triphosphate to the 3'-end of a DNA initiator. One of the in vivo functions of this enzyme is the addition of nucleotides at the junction (N region) of rearranged Ig heavy chain and T-cell receptor gene segments during the maturation of B- and T-cells. The protein is DNA nucleotidylexotransferase (dntt) of Oncorhynchus mykiss (Rainbow trout).